Reading from the N-terminus, the 180-residue chain is Large ribosomal subunit protein uL5 (180 aa).

The protein belongs to the universal ribosomal protein uL5 family. Part of the 50S ribosomal subunit; part of the 5S rRNA/L5/L18/L25 subcomplex. Contacts the 5S rRNA and the P site tRNA. Forms a bridge to the 30S subunit in the 70S ribosome.

Its function is as follows. This is one of the proteins that bind and probably mediate the attachment of the 5S RNA into the large ribosomal subunit, where it forms part of the central protuberance. In the 70S ribosome it contacts protein S13 of the 30S subunit (bridge B1b), connecting the 2 subunits; this bridge is implicated in subunit movement. Contacts the P site tRNA; the 5S rRNA and some of its associated proteins might help stabilize positioning of ribosome-bound tRNAs. The protein is Large ribosomal subunit protein uL5 of Leuconostoc mesenteroides subsp. mesenteroides (strain ATCC 8293 / DSM 20343 / BCRC 11652 / CCM 1803 / JCM 6124 / NCDO 523 / NBRC 100496 / NCIMB 8023 / NCTC 12954 / NRRL B-1118 / 37Y).